Reading from the N-terminus, the 582-residue chain is NudC domain-containing protein 1 (582 aa).

Serine 7 bears the Phosphoserine mark. Residues 272–360 (KVEPLYYWQQ…NEGLMWPELV (89 aa)) form the CS domain. Serine 387 carries the post-translational modification Phosphoserine.

Its subcellular location is the cytoplasm. It localises to the nucleus. The sequence is that of NudC domain-containing protein 1 from Mus musculus (Mouse).